Here is a 146-residue protein sequence, read N- to C-terminus: Hemoglobin subunit beta-1 (146 aa).

The region spanning 2–146 (KWSDKERAVI…VVSALGKQYC (145 aa)) is the Globin domain. 2 residues coordinate heme b: H63 and H92.

Belongs to the globin family. Hb1 is a heterotetramer of two alpha-1 chains and two beta-1 chains; Hb2 is a heterotetramer of two alpha-2 chains and two beta-1 chains. Red blood cells.

Its function is as follows. Involved in oxygen transport from gills to the various peripheral tissues. This chain is Hemoglobin subunit beta-1 (hbb1), found in Anarhichas minor (Arctic spotted wolffish).